The following is a 534-amino-acid chain: MFS transporter fmqE (534 aa).

The next 12 membrane-spanning stretches (helical) occupy residues 48 to 68 (LLLF…VCAS), 109 to 129 (LWTS…GFLA), 136 to 156 (WTAV…VFSS), 169 to 189 (GAVV…VAPI), 194 to 214 (ALLQ…LGIV), 228 to 248 (IVFG…FLVP), 326 to 346 (AIGV…GLNV), 349 to 369 (VFDI…LGWL), 379 to 399 (LWLW…ALGF), 407 to 427 (LAIA…TVGV), 447 to 467 (VAFI…PYMY), and 478 to 498 (TGFV…FLVP).

It belongs to the major facilitator superfamily. Sugar transporter (TC 2.A.1.1) family.

The protein resides in the cytoplasmic vesicle membrane. In terms of biological role, MFS transporter; part of the gene cluster that mediates the biosynthesis of the antitumor cytotoxic peptidyl alkaloids fumiquinazolines that confer a dual-usage capability to defend against phagocytes in the environment and animal hosts. Probably involved in fumiquinazolines metabolism and transport. The chain is MFS transporter fmqE from Aspergillus fumigatus (strain ATCC MYA-4609 / CBS 101355 / FGSC A1100 / Af293) (Neosartorya fumigata).